Consider the following 487-residue polypeptide: WRKY transcription factor 1 (487 aa).

The disordered stretch occupies residues 69-104 (QSEVDVASPVSEKAPKVSESSGALSLQSGSEGNSPF). The residue at position 76 (Ser76) is a Phosphoserine. Positions 86-101 (SESSGALSLQSGSEGN) are enriched in polar residues. Positions 105–169 (IREKVMEDGY…YFGEHDHPKP (65 aa)) form a DNA-binding region, WRKY 1. Zn(2+) contacts are provided by Cys136, Cys141, His164, and His166. Residues 255–287 (SSRITGDNTHKDYNSPTAKRRKKGGNIELSPVE) form a disordered region. A Nuclear localization signal motif is present at residues 273–277 (KRRKK). Residues 301–366 (TLFDIVNDGY…YEGKHDHDMP (66 aa)) constitute a DNA-binding region (WRKY 2). Zn(2+)-binding residues include Cys332, Cys337, His361, and His363. Positions 380 to 487 (EVDDKEGDAN…QKPKTEPAQS (108 aa)) are disordered. Residues 390–401 (KTPQSSTLQSIT) are compositionally biased toward polar residues. Basic and acidic residues-rich tracts occupy residues 429-462 (LDEK…DDKT) and 476-487 (EEQKPKTEPAQS).

It belongs to the WRKY group I family. Expressed to similar levels in root and flower, to a somewhat lower level in stem and to low levels in leaf and siliques.

The protein localises to the nucleus. Functionally, transcription factor. Binds to a 5'-CGTTGACCGAG-3' consensus core sequence which contains a W box, a frequently occurring elicitor-responsive cis-acting element. In Arabidopsis thaliana (Mouse-ear cress), this protein is WRKY transcription factor 1.